The primary structure comprises 94 residues: Small ribosomal subunit protein eS24 (94 aa).

The protein belongs to the eukaryotic ribosomal protein eS24 family.

The chain is Small ribosomal subunit protein eS24 from Nanoarchaeum equitans (strain Kin4-M).